An 802-amino-acid chain; its full sequence is Phenylalanine--tRNA ligase beta subunit (802 aa).

Positions R40–R149 constitute a tRNA-binding domain. In terms of domain architecture, B5 spans H407–V484. Mg(2+) is bound by residues D462, D468, E471, and E472. In terms of domain architecture, FDX-ACB spans S710 to R802.

The protein belongs to the phenylalanyl-tRNA synthetase beta subunit family. Type 1 subfamily. Tetramer of two alpha and two beta subunits. It depends on Mg(2+) as a cofactor.

The protein localises to the cytoplasm. The enzyme catalyses tRNA(Phe) + L-phenylalanine + ATP = L-phenylalanyl-tRNA(Phe) + AMP + diphosphate + H(+). This is Phenylalanine--tRNA ligase beta subunit from Leptospira borgpetersenii serovar Hardjo-bovis (strain L550).